Reading from the N-terminus, the 414-residue chain is 3-phosphoshikimate 1-carboxyvinyltransferase (414 aa).

The 3-phosphoshikimate site is built by K20, S21, and R25. K20 contributes to the phosphoenolpyruvate binding site. Phosphoenolpyruvate contacts are provided by G85 and R113. 3-phosphoshikimate is bound by residues S154, S155, Q156, S181, D296, and K323. Phosphoenolpyruvate is bound at residue Q156. Residue D296 is the Proton acceptor of the active site. Phosphoenolpyruvate is bound by residues R327, R371, and K395.

The protein belongs to the EPSP synthase family. Monomer.

The protein resides in the cytoplasm. It catalyses the reaction 3-phosphoshikimate + phosphoenolpyruvate = 5-O-(1-carboxyvinyl)-3-phosphoshikimate + phosphate. The protein operates within metabolic intermediate biosynthesis; chorismate biosynthesis. Its function is as follows. Catalyzes the transfer of the enolpyruvyl moiety of phosphoenolpyruvate (PEP) to the 5-hydroxyl of shikimate-3-phosphate (S3P) to produce enolpyruvyl shikimate-3-phosphate and inorganic phosphate. This chain is 3-phosphoshikimate 1-carboxyvinyltransferase, found in Saccharolobus islandicus (strain Y.G.57.14 / Yellowstone #1) (Sulfolobus islandicus).